A 323-amino-acid polypeptide reads, in one-letter code: Thymidine kinase (323 aa).

11-18 (GPHGLGKT) is an ATP binding site. Glutamate 36 serves as the catalytic Proton acceptor. The substrate site is built by tyrosine 54 and glutamine 78. Arginine 169 serves as a coordination point for ATP. A substrate-binding site is contributed by arginine 175.

It belongs to the herpesviridae thymidine kinase family. Homodimer.

The catalysed reaction is thymidine + ATP = dTMP + ADP + H(+). In terms of biological role, catalyzes the transfer of the gamma-phospho group of ATP to thymidine to generate dTMP in the salvage pathway of pyrimidine synthesis. The dTMP serves as a substrate for DNA polymerase during viral DNA replication. Allows the virus to be reactivated and to grow in non-proliferative cells lacking a high concentration of phosphorylated nucleic acid precursors. In Bos taurus (Bovine), this protein is Thymidine kinase.